The sequence spans 147 residues: TRAF-interacting protein with FHA domain-containing protein B (147 aa).

The FHA domain maps to 36–108; it reads LLVGRGQNTH…LGTINRISFS (73 aa).

Interacts with TIFA. As to expression, expressed at high levels in spleen and at moderate levels in lung, thymus, and small intestine.

Inhibits TIFA-mediated TRAF6 activation possibly by inducing a conformational change in TIFA. This is TRAF-interacting protein with FHA domain-containing protein B from Mus musculus (Mouse).